The sequence spans 167 residues: Dimethylamine corrinoid protein 3 (167 aa).

Residues M1–K44 form the B12-binding N-terminal domain. Residues M45–A167 form the B12-binding domain. H58 contacts methylcob(III)alamin.

It belongs to the methylamine corrinoid protein family.

It functions in the pathway one-carbon metabolism; methanogenesis from dimethylamine. In terms of biological role, acts as a methyl group carrier between MtbB and MtbA. The sequence is that of Dimethylamine corrinoid protein 3 (mtbC3) from Methanosarcina mazei (strain ATCC BAA-159 / DSM 3647 / Goe1 / Go1 / JCM 11833 / OCM 88) (Methanosarcina frisia).